A 213-amino-acid polypeptide reads, in one-letter code: Adenylate kinase (213 aa).

Residue 14–19 (GSGKGT) participates in ATP binding. Residues 34–63 (SSGNLLRSAIKASTPLGIKASEYIDEGQLV) are NMP. Residues Ser-35, Arg-40, 61–63 (QLV), 89–92 (GFPR), and Gln-96 each bind AMP. The LID stretch occupies residues 129–162 (SRFICPSCNFVYNQSQGFRECPTCHSELVRRSDD). ATP is bound at residue Arg-130. Zn(2+) contacts are provided by Cys-133 and Cys-136. 139-140 (VY) lines the ATP pocket. Zn(2+) is bound by residues Cys-149 and Cys-152. 2 residues coordinate AMP: Arg-159 and Arg-170. Lys-198 serves as a coordination point for ATP.

It belongs to the adenylate kinase family. As to quaternary structure, monomer.

Its subcellular location is the cytoplasm. The enzyme catalyses AMP + ATP = 2 ADP. The protein operates within purine metabolism; AMP biosynthesis via salvage pathway; AMP from ADP: step 1/1. Catalyzes the reversible transfer of the terminal phosphate group between ATP and AMP. Plays an important role in cellular energy homeostasis and in adenine nucleotide metabolism. The sequence is that of Adenylate kinase from Chlamydia felis (strain Fe/C-56) (Chlamydophila felis).